Reading from the N-terminus, the 66-residue chain is Large ribosomal subunit protein bL31 (66 aa).

Zn(2+)-binding residues include cysteine 16, cysteine 18, cysteine 36, and cysteine 39.

The protein belongs to the bacterial ribosomal protein bL31 family. Type A subfamily. Part of the 50S ribosomal subunit. Zn(2+) is required as a cofactor.

In terms of biological role, binds the 23S rRNA. This chain is Large ribosomal subunit protein bL31, found in Campylobacter lari (strain RM2100 / D67 / ATCC BAA-1060).